The chain runs to 229 residues: Enolase-phosphatase E1 (229 aa).

Belongs to the HAD-like hydrolase superfamily. MasA/MtnC family. Monomer. Mg(2+) is required as a cofactor.

The catalysed reaction is 5-methylsulfanyl-2,3-dioxopentyl phosphate + H2O = 1,2-dihydroxy-5-(methylsulfanyl)pent-1-en-3-one + phosphate. It functions in the pathway amino-acid biosynthesis; L-methionine biosynthesis via salvage pathway; L-methionine from S-methyl-5-thio-alpha-D-ribose 1-phosphate: step 3/6. The protein operates within amino-acid biosynthesis; L-methionine biosynthesis via salvage pathway; L-methionine from S-methyl-5-thio-alpha-D-ribose 1-phosphate: step 4/6. Bifunctional enzyme that catalyzes the enolization of 2,3-diketo-5-methylthiopentyl-1-phosphate (DK-MTP-1-P) into the intermediate 2-hydroxy-3-keto-5-methylthiopentenyl-1-phosphate (HK-MTPenyl-1-P), which is then dephosphorylated to form the acireductone 1,2-dihydroxy-3-keto-5-methylthiopentene (DHK-MTPene). This is Enolase-phosphatase E1 from Yersinia pseudotuberculosis serotype O:1b (strain IP 31758).